The sequence spans 485 residues: Warthog protein 1 (485 aa).

Residues 1–21 form the signal peptide; the sequence is MMVMNPLTATFLAALIGTAAS. The interval 236–258 is disordered; it reads DQRLSPSTDVQSDSYVSPTEADP. Polar residues predominate over residues 239 to 252; it reads LSPSTDVQSDSYVS.

This sequence belongs to the hedgehog family. The C-terminal domain displays an autoproteolysis activity.

It localises to the secreted. It is found in the cell surface. Its subcellular location is the cell membrane. The protein localises to the extracellular space. Functionally, intercellular signal essential for a variety of patterning events during development. The protein is Warthog protein 1 (wrt-1) of Caenorhabditis elegans.